A 298-amino-acid chain; its full sequence is Zinc import ATP-binding protein ZnuC (298 aa).

Positions 17 to 232 constitute an ABC transporter domain; sequence IELRNAGVYR…PEYVRLFGSR (216 aa). An ATP-binding site is contributed by 49–56; sequence GPNGAGKS. The interval 273-298 is disordered; sequence RGHCHVEDGHHHDHEHHHHEGGQPRA. Positions 276–298 are enriched in basic and acidic residues; that stretch reads CHVEDGHHHDHEHHHHEGGQPRA.

The protein belongs to the ABC transporter superfamily. Zinc importer (TC 3.A.1.15.5) family. In terms of assembly, the complex is composed of two ATP-binding proteins (ZnuC), two transmembrane proteins (ZnuB) and a solute-binding protein (ZnuA).

It is found in the cell inner membrane. It catalyses the reaction Zn(2+)(out) + ATP(in) + H2O(in) = Zn(2+)(in) + ADP(in) + phosphate(in) + H(+)(in). Functionally, part of the ABC transporter complex ZnuABC involved in zinc import. Responsible for energy coupling to the transport system. This Brucella suis biovar 1 (strain 1330) protein is Zinc import ATP-binding protein ZnuC.